A 211-amino-acid polypeptide reads, in one-letter code: Uracil phosphoribosyltransferase (211 aa).

Residues arginine 77, arginine 102, and 129 to 137 (DPMLATGGS) each bind 5-phospho-alpha-D-ribose 1-diphosphate. Uracil contacts are provided by residues isoleucine 192 and 197 to 199 (GDA). 5-phospho-alpha-D-ribose 1-diphosphate is bound at residue aspartate 198.

The protein belongs to the UPRTase family. Mg(2+) is required as a cofactor.

The catalysed reaction is UMP + diphosphate = 5-phospho-alpha-D-ribose 1-diphosphate + uracil. The protein operates within pyrimidine metabolism; UMP biosynthesis via salvage pathway; UMP from uracil: step 1/1. With respect to regulation, allosterically activated by GTP. In terms of biological role, catalyzes the conversion of uracil and 5-phospho-alpha-D-ribose 1-diphosphate (PRPP) to UMP and diphosphate. The protein is Uracil phosphoribosyltransferase of Corynebacterium efficiens (strain DSM 44549 / YS-314 / AJ 12310 / JCM 11189 / NBRC 100395).